The chain runs to 415 residues: Zona pellucida-like domain-containing protein 1 (415 aa).

Residues 1–19 form the signal peptide; that stretch reads MEPIWLLLLLAIFTVSVSA. The Extracellular portion of the chain corresponds to 20-372; that stretch reads QFNGYNCDAN…QQFQINSVTS (353 aa). The 278-residue stretch at 43-320 folds into the ZP domain; that stretch reads YCGVQTITMK…PTCHNRDRRD (278 aa). 4 disulfides stabilise this stretch: cysteine 44–cysteine 155, cysteine 79–cysteine 104, cysteine 235–cysteine 296, and cysteine 255–cysteine 313. A helical transmembrane segment spans residues 373-393; sequence ALISGVVILGATSLSFFIIAL. The Cytoplasmic segment spans residues 394 to 415; that stretch reads TLLNRKKQNSLVLCGIRNPVFN.

In terms of processing, proteolytically cleaved before the transmembrane segment to yield the secreted form found in the extracellular matrix of the cupula.

The protein localises to the cytoplasmic vesicle membrane. It localises to the secreted. Its subcellular location is the extracellular space. The protein resides in the extracellular matrix. Its function is as follows. Glycoprotein which is a component of the gelatinous extracellular matrix in the cupulae of the vestibular organ. This chain is Zona pellucida-like domain-containing protein 1 (zpld1), found in Xenopus laevis (African clawed frog).